Consider the following 209-residue polypeptide: MRFMEEEFYKIFKGAGLIKTLIRSIFLTNRNKFSKPSKTKPIQLTECIGCGLCVDVCPTNAIKIFSFRETICSVCGTCVDVCPNNAIIKDRFTIDADKCTKCGVCVLFCPIPIIKKEIPKPKTPVILKDRCNSCGLCECEAIDIINKEINPEKCKLCLSCIEKCPLQAILTPDEYINSLIVKVDIDSCIFCRECEEICPIRGNYEHRES.

4Fe-4S ferredoxin-type domains follow at residues 38–67 (KTKP…IFSF), 63–92 (KIFS…KDRF), 90–119 (DRFT…KEIP), 122–151 (KTPV…EINP), 145–174 (INKE…TPDE), and 179–209 (LIVK…HRES). [4Fe-4S] cluster-binding residues include Cys-47, Cys-50, Cys-53, Cys-57, Cys-72, Cys-75, Cys-78, Cys-82, Cys-99, Cys-102, Cys-105, and Cys-109. [4Fe-4S] cluster contacts are provided by Cys-154, Cys-157, Cys-160, Cys-164, Cys-188, Cys-191, Cys-194, and Cys-198.

This is an uncharacterized protein from Methanocaldococcus jannaschii (strain ATCC 43067 / DSM 2661 / JAL-1 / JCM 10045 / NBRC 100440) (Methanococcus jannaschii).